Consider the following 541-residue polypeptide: Metal transporter Nramp1 (541 aa).

N-linked (GlcNAc...) asparagine glycosylation occurs at N17. The next 10 helical transmembrane spans lie at 45–65 (LFAY…PGNF), 78–98 (ELLW…SLAA), 122–142 (FILW…EVIG), 153–173 (IPVW…LALQ), 182–202 (LFIA…LGYA), 222–242 (GAAG…NLFL), 271–291 (GFAL…SGAV), 315–335 (FLLE…ALLA), 371–391 (SLAI…GAGK), and 392–412 (LIII…VPLL). N426 carries an N-linked (GlcNAc...) asparagine glycan. Transmembrane regions (helical) follow at residues 430-450 (ISSI…YYLA) and 465-485 (VAAI…LAGV). An N-linked (GlcNAc...) asparagine glycan is attached at N511.

Belongs to the NRAMP (TC 2.A.55) family.

The protein localises to the membrane. Probable divalent metal transporter. The chain is Metal transporter Nramp1 from Populus trichocarpa (Western balsam poplar).